The chain runs to 244 residues: MDKSELVQKAKLSEQAERYDDMAASMKAVTELGAELSNEERNLLSVAYKNVVGARRSSWRVISSIEQKTEGNDKRQQMAREYREKVETELQDICKDVLDLLDRFLVPNATPPESKVFYLKMKGDYYRYLSEVASGDSKQETVASSQQAYQEAFEISKSEMQPTHPIRLGLALNFSVFYYEILNSPEKACSLAKSAFDEAIAELDTLNEESYKDSTLIMQLLRDNLTLWTSENQGEEADNVEGDN.

Met-1 carries the post-translational modification N-acetylmethionine.

The protein belongs to the 14-3-3 family. As to quaternary structure, homodimer, and heterodimer with other family members.

Its subcellular location is the cytoplasm. Its function is as follows. Adapter protein implicated in the regulation of a large spectrum of both general and specialized signaling pathways. Binds to a large number of partners, usually by recognition of a phosphoserine or phosphothreonine motif. Binding generally results in the modulation of the activity of the binding partner. This is 14-3-3 protein beta/alpha-A (ywhab-a) from Xenopus laevis (African clawed frog).